A 533-amino-acid chain; its full sequence is Laccase-2 (533 aa).

A signal peptide spans 1–23 (MFPGARILATLTLALHLLHGAHA). 3 consecutive Plastocyanin-like domains span residues 25–171 (IGPA…LSLY), 173–336 (IDNA…LETN), and 382–501 (TAPV…FAED). Residues H98, H100, H143, and H145 each coordinate Cu cation. 2 disulfide bridges follow: C119-C516 and C151-C238. Positions 427, 430, and 432 each coordinate Cu cation. Residue N467 is glycosylated (N-linked (GlcNAc...) (high mannose) asparagine). Residues H483, C484, H485, and H489 each contribute to the Cu cation site.

It belongs to the multicopper oxidase family. The cofactor is Cu cation. Post-translationally, N-glycosylated at Asn-467; contains a high-mannose glycan with a varying number of mannose residues.

It localises to the secreted. The catalysed reaction is 4 hydroquinone + O2 = 4 benzosemiquinone + 2 H2O. Lignin degradation and detoxification of lignin-derived products. In Pleurotus ostreatus (Oyster mushroom), this protein is Laccase-2 (POX2).